Consider the following 617-residue polypeptide: Alkaline/neutral invertase E, chloroplastic (617 aa).

The N-terminal 45 residues, 1–45, are a transit peptide targeting the chloroplast; the sequence is MAASETVLRVPLGSVSQSCYLASFFVNSTPNLSFKPVSRNRKTVR. A Phosphoserine modification is found at S87.

The protein belongs to the glycosyl hydrolase 100 family. Expressed in roots, leaves and flowers.

Its subcellular location is the plastid. It localises to the chloroplast. The enzyme catalyses Hydrolysis of terminal non-reducing beta-D-fructofuranoside residues in beta-D-fructofuranosides.. Chloroplastic invertase that cleaves sucrose into glucose and fructose and is associated with the development of the photosynthetic apparatus and the assimilation of nitrogen in seedlings to control the sucrose to hexose ratio. Participates in the carbon flux between the cytosol and plastids in leaves. The chain is Alkaline/neutral invertase E, chloroplastic from Arabidopsis thaliana (Mouse-ear cress).